The following is a 318-amino-acid chain: uncharacterized protein (318 aa).

The protein belongs to the asfivirus F317L family.

It localises to the virion. This is an uncharacterized protein from African swine fever virus (isolate Tick/Malawi/Lil 20-1/1983) (ASFV).